The following is a 178-amino-acid chain: Cytidylate kinase (178 aa).

An ATP-binding site is contributed by 7-15; it reads GLPGTGTTT.

Belongs to the cytidylate kinase family. Type 2 subfamily.

It localises to the cytoplasm. The catalysed reaction is CMP + ATP = CDP + ADP. It carries out the reaction dCMP + ATP = dCDP + ADP. In Methanocaldococcus jannaschii (strain ATCC 43067 / DSM 2661 / JAL-1 / JCM 10045 / NBRC 100440) (Methanococcus jannaschii), this protein is Cytidylate kinase (cmk).